Consider the following 480-residue polypeptide: F-box only protein 3 (480 aa).

One can recognise an F-box domain in the interval 10-56 (LLTLESLPTDPLLLILSFVDYRDLINCCYVSRRLSQLSTHDPLWRRH). In terms of domain architecture, ApaG spans 278 to 408 (VATTGDITVS…FHMACPTFRV (131 aa)). Positions 419–458 (EYEEMEEEAEEEEEEENDDSADMDESDESDADENESDEGE) are enriched in acidic residues. The tract at residues 419–463 (EYEEMEEEAEEEEEEENDDSADMDESDESDADENESDEGEGEARR) is disordered.

Part of a SCF (SKP1-cullin-F-box) protein ligase complex SCF(FBXO3) consisting of FBXO3, SKP1, CUL1 and RBX1. Interacts with PML, interaction is direct and takes place either alone or within the SCF complex.

The protein localises to the nucleus. It participates in protein modification; protein ubiquitination. Functionally, substrate recognition component of the SCF (SKP1-CUL1-F-box protein)-type E3 ubiquitin ligase complex, SCF(FBXO3), which mediates the ubiquitination and subsequent proteasomal degradation of target proteins. Mediates the ubiquitination of HIPK2 and probably that of EP300, leading to rapid degradation by the proteasome. In the presence of PML, HIPK2 ubiquitination still occurs, but degradation is prevented. PML, HIPK2 and FBXO3 may act synergically to activate p53/TP53-dependent transactivation. The SCF(FBXO3) also acts as a regulator of inflammation by mediating ubiquitination and degradation of FBXL2: specifically recognizes FBXL2 phosphorylated at 'Thr-404' and promotes its ubiquitination. This is F-box only protein 3 (Fbxo3) from Mus musculus (Mouse).